The sequence spans 443 residues: Probable protein S-acyltransferase 7 (443 aa).

A run of 2 helical transmembrane segments spans residues Ser44–Ala64 and Gly76–Leu96. Positions Lys149–Phe199 constitute a DHHC domain. Cys179 acts as the S-palmitoyl cysteine intermediate in catalysis. 2 helical membrane-spanning segments follow: residues Phe193–Trp213 and Ser237–Phe257. Phosphoserine occurs at positions 327 and 377. Over residues Ala382–Ser392 the composition is skewed to basic and acidic residues. The disordered stretch occupies residues Ala382–Thr443. Ser406 is subject to Phosphoserine.

Belongs to the DHHC palmitoyltransferase family.

It is found in the cell membrane. The enzyme catalyses L-cysteinyl-[protein] + hexadecanoyl-CoA = S-hexadecanoyl-L-cysteinyl-[protein] + CoA. In terms of biological role, palmitoyl acyltransferase. The polypeptide is Probable protein S-acyltransferase 7 (PAT07) (Arabidopsis thaliana (Mouse-ear cress)).